Here is a 425-residue protein sequence, read N- to C-terminus: Kynurenine/alpha-aminoadipate aminotransferase, mitochondrial (425 aa).

Residues 1-29 (MNYARFITATSAARKPSTIRVMTEILSKA) constitute a mitochondrion transit peptide. Arginine 20 lines the substrate pocket. Lysine 69 is modified (N6-acetyllysine). Substrate contacts are provided by tyrosine 74 and tyrosine 142. Residues 178-208 (WKPEDSKNPKKNSPKFLYTVPNGNNPSGNSL) are disordered. Lysine 179 carries the post-translational modification N6-acetyllysine. A compositionally biased stretch (polar residues) spans 198–208 (PNGNNPSGNSL). A substrate-binding site is contributed by asparagine 202. N6-(pyridoxal phosphate)lysine; alternate is present on lysine 263. Residues lysine 263 and lysine 339 each carry the N6-acetyllysine; alternate modification. 2 positions are modified to N6-succinyllysine; alternate: lysine 263 and lysine 339. Arginine 399 contributes to the substrate binding site. Lysine 422 carries the post-translational modification N6-acetyllysine.

The protein belongs to the class-I pyridoxal-phosphate-dependent aminotransferase family. As to quaternary structure, homodimer. It depends on pyridoxal 5'-phosphate as a cofactor.

It localises to the mitochondrion. It catalyses the reaction L-kynurenine + 2-oxoglutarate = kynurenate + L-glutamate + H2O. The enzyme catalyses L-2-aminoadipate + 2-oxoglutarate = 2-oxoadipate + L-glutamate. It carries out the reaction glycine + 2-oxoglutarate = glyoxylate + L-glutamate. The catalysed reaction is L-kynurenine + glyoxylate = kynurenate + glycine + H2O. It catalyses the reaction 3-hydroxy-L-kynurenine + glyoxylate = xanthurenate + glycine + H2O. The enzyme catalyses 2-oxohexanoate + L-kynurenine = L-2-aminohexanoate + kynurenate + H2O. It carries out the reaction 3-phenylpyruvate + L-kynurenine = kynurenate + L-phenylalanine + H2O. The catalysed reaction is 4-methylsulfanyl-2-oxobutanoate + L-kynurenine = kynurenate + L-methionine + H2O. It catalyses the reaction 2-oxo-3-sulfanylpropanoate + L-kynurenine = kynurenate + L-cysteine + H2O. The enzyme catalyses indole-3-pyruvate + L-kynurenine = kynurenate + L-tryptophan + H2O. It carries out the reaction 2-oxopentanoate + L-kynurenine = L-2-aminopentanoate + kynurenate + H2O. The catalysed reaction is 4-methyl-2-oxopentanoate + L-kynurenine = kynurenate + L-leucine + H2O. It catalyses the reaction glyoxylate + L-methionine = 4-methylsulfanyl-2-oxobutanoate + glycine. The enzyme catalyses L-2-aminoadipate + glyoxylate = 2-oxoadipate + glycine. It carries out the reaction L-tyrosine + glyoxylate = 3-(4-hydroxyphenyl)pyruvate + glycine. The catalysed reaction is glyoxylate + L-phenylalanine = 3-phenylpyruvate + glycine. It catalyses the reaction L-tryptophan + glyoxylate = indole-3-pyruvate + glycine. The enzyme catalyses L-leucine + glyoxylate = 4-methyl-2-oxopentanoate + glycine. It carries out the reaction 2-oxobutanoate + L-kynurenine = (2S)-2-aminobutanoate + kynurenate + H2O. The catalysed reaction is 2-oxoadipate + L-kynurenine = L-2-aminoadipate + kynurenate + H2O. It participates in amino-acid degradation; L-lysine degradation via saccharopine pathway; glutaryl-CoA from L-lysine: step 4/6. Its function is as follows. Transaminase with broad substrate specificity. Has transaminase activity towards aminoadipate, kynurenine, methionine and glutamate. Shows activity also towards tryptophan, aspartate and hydroxykynurenine. Accepts a variety of oxo-acids as amino-group acceptors, with a preference for 2-oxoglutarate, 2-oxocaproic acid, phenylpyruvate and alpha-oxo-gamma-methiol butyric acid. Can also use glyoxylate as amino-group acceptor (in vitro). The protein is Kynurenine/alpha-aminoadipate aminotransferase, mitochondrial of Bos taurus (Bovine).